Reading from the N-terminus, the 164-residue chain is Cyanate hydratase (164 aa).

Active-site residues include R90, E93, and S116.

It belongs to the cyanase family.

It catalyses the reaction cyanate + hydrogencarbonate + 3 H(+) = NH4(+) + 2 CO2. Catalyzes the reaction of cyanate with bicarbonate to produce ammonia and carbon dioxide. The protein is Cyanate hydratase of Ricinus communis (Castor bean).